A 143-amino-acid polypeptide reads, in one-letter code: Transcriptional regulator MraZ (143 aa).

SpoVT-AbrB domains are found at residues 5-47 (TYTP…PRDE) and 76-119 (TDEQ…DAQA).

This sequence belongs to the MraZ family. In terms of assembly, forms oligomers.

It localises to the cytoplasm. The protein localises to the nucleoid. The polypeptide is Transcriptional regulator MraZ (Mycolicibacterium smegmatis (strain ATCC 700084 / mc(2)155) (Mycobacterium smegmatis)).